We begin with the raw amino-acid sequence, 415 residues long: Glutamyl-tRNA reductase (415 aa).

Residues 49–52, serine 104, 109–111, and glutamine 115 contribute to the substrate site; these read TCNR and EPQ. Cysteine 50 acts as the Nucleophile in catalysis. 184–189 contacts NADP(+); sequence GAGEMI.

The protein belongs to the glutamyl-tRNA reductase family. Homodimer.

It carries out the reaction (S)-4-amino-5-oxopentanoate + tRNA(Glu) + NADP(+) = L-glutamyl-tRNA(Glu) + NADPH + H(+). It participates in porphyrin-containing compound metabolism; protoporphyrin-IX biosynthesis; 5-aminolevulinate from L-glutamyl-tRNA(Glu): step 1/2. Its function is as follows. Catalyzes the NADPH-dependent reduction of glutamyl-tRNA(Glu) to glutamate 1-semialdehyde (GSA). The protein is Glutamyl-tRNA reductase of Neisseria meningitidis serogroup C / serotype 2a (strain ATCC 700532 / DSM 15464 / FAM18).